Reading from the N-terminus, the 309-residue chain is Porphobilinogen deaminase (309 aa).

At Cys244 the chain carries S-(dipyrrolylmethanemethyl)cysteine.

This sequence belongs to the HMBS family. As to quaternary structure, monomer. The cofactor is dipyrromethane.

The enzyme catalyses 4 porphobilinogen + H2O = hydroxymethylbilane + 4 NH4(+). The protein operates within porphyrin-containing compound metabolism; protoporphyrin-IX biosynthesis; coproporphyrinogen-III from 5-aminolevulinate: step 2/4. Its function is as follows. Tetrapolymerization of the monopyrrole PBG into the hydroxymethylbilane pre-uroporphyrinogen in several discrete steps. The sequence is that of Porphobilinogen deaminase from Listeria monocytogenes serotype 4b (strain CLIP80459).